A 240-amino-acid chain; its full sequence is tRNA (guanine-N(1)-)-methyltransferase (240 aa).

S-adenosyl-L-methionine is bound by residues glycine 110 and 129–134; that span reads LGDFVL.

This sequence belongs to the RNA methyltransferase TrmD family. In terms of assembly, homodimer.

It localises to the cytoplasm. The enzyme catalyses guanosine(37) in tRNA + S-adenosyl-L-methionine = N(1)-methylguanosine(37) in tRNA + S-adenosyl-L-homocysteine + H(+). In terms of biological role, specifically methylates guanosine-37 in various tRNAs. The polypeptide is tRNA (guanine-N(1)-)-methyltransferase (Clostridium botulinum (strain Kyoto / Type A2)).